We begin with the raw amino-acid sequence, 338 residues long: Glycerol-3-phosphate dehydrogenase [NAD(P)+] (338 aa).

Trp-20 and Lys-110 together coordinate NADPH. The sn-glycerol 3-phosphate site is built by Lys-110, Gly-141, and Ser-143. Ala-145 is an NADPH binding site. Lys-197, Asp-250, Ser-260, Arg-261, and Asn-262 together coordinate sn-glycerol 3-phosphate. Catalysis depends on Lys-197, which acts as the Proton acceptor. Arg-261 contributes to the NADPH binding site. An NADPH-binding site is contributed by Glu-287.

This sequence belongs to the NAD-dependent glycerol-3-phosphate dehydrogenase family.

Its subcellular location is the cytoplasm. The catalysed reaction is sn-glycerol 3-phosphate + NAD(+) = dihydroxyacetone phosphate + NADH + H(+). The enzyme catalyses sn-glycerol 3-phosphate + NADP(+) = dihydroxyacetone phosphate + NADPH + H(+). Its pathway is membrane lipid metabolism; glycerophospholipid metabolism. Functionally, catalyzes the reduction of the glycolytic intermediate dihydroxyacetone phosphate (DHAP) to sn-glycerol 3-phosphate (G3P), the key precursor for phospholipid synthesis. The sequence is that of Glycerol-3-phosphate dehydrogenase [NAD(P)+] from Aster yellows witches'-broom phytoplasma (strain AYWB).